We begin with the raw amino-acid sequence, 362 residues long: 3-dehydroquinate synthase (362 aa).

NAD(+) contacts are provided by residues 71 to 76 (DGEQYK), 105 to 109 (GVVGD), 129 to 130 (TT), lysine 142, lysine 151, and 169 to 172 (CLKT). Residues glutamate 184, histidine 248, and histidine 265 each contribute to the Zn(2+) site.

The protein belongs to the sugar phosphate cyclases superfamily. Dehydroquinate synthase family. It depends on Co(2+) as a cofactor. Requires Zn(2+) as cofactor. NAD(+) is required as a cofactor.

Its subcellular location is the cytoplasm. The enzyme catalyses 7-phospho-2-dehydro-3-deoxy-D-arabino-heptonate = 3-dehydroquinate + phosphate. It functions in the pathway metabolic intermediate biosynthesis; chorismate biosynthesis; chorismate from D-erythrose 4-phosphate and phosphoenolpyruvate: step 2/7. Its function is as follows. Catalyzes the conversion of 3-deoxy-D-arabino-heptulosonate 7-phosphate (DAHP) to dehydroquinate (DHQ). This chain is 3-dehydroquinate synthase, found in Yersinia pseudotuberculosis serotype O:1b (strain IP 31758).